The following is a 626-amino-acid chain: MLAFAARTVVKPLGLLKPSSLMKVSGRFKAHQDALPRLPVPPLQQSLDYYLKALQPIVSEEEWAHTKQLVDEFQTSGGVGERLQKGLERRAKKMENWLSEWWLKTAYLQFRQPVVIYSSPGVILPKQDFVDLQGQLRFAAKLIEGVLDFKSMIDNETLPVEFLGGQPLCMNQYYQILSSCRVPGPKQDSVVNFLKSKRPPTHITVVHNYQFFELDVYHSDGTPLTSDQIFVQLEKIWNSSLQSNKEPVGILTSNHRNTWAKAYNNLIKDKVNRESVNSIQKSIFTVCLDKQVPRVSDDVYRNHVAGQMLHGGGSKFNSGNRWFDKTLQFIVAEDGSCGMVYEHAAAEGPPIVALVDHVMEYTKKPELVRSPMVPLPMPKKLRFNITPEIKNDIEKAKQNLSIMIQDLDIMMLTFHHFGKDFPKSEKLSPDAFIQVALQLAYYRIYGQACATYESASLRMFHLGRTDTIRSASIDSLAFVKGMGDSTVPEQQKVELLRKAVQAHRAYTDRAIRGEAFDRHLLGLKLQAIEDLVSMPDIFMDTSYAIAMHFNLSTSQVPAKTDCVMFFGPVVPDGYGICYNPMEAHINFSVSAYNSCAETNAARMAHYLEKALLDMRTLLQNHPRAKL.

The residue at position 93 (Lys93) is an N6-succinyllysine. An N6-acetyllysine; alternate modification is found at Lys261. Lys261 bears the N6-succinyllysine; alternate mark. At Lys268 the chain carries N6-acetyllysine. His343 functions as the Proton acceptor in the catalytic mechanism. Residues Lys419 and 423-430 (KSEKLSPD) contribute to the CoA site. Residues Tyr452 and Ser454 each coordinate (R)-carnitine. Ser456 contacts CoA. Thr465 is a (R)-carnitine binding site. The CoA site is built by Arg504 and Gln555. The Microbody targeting signal signature appears at 624–626 (AKL).

The protein belongs to the carnitine/choline acetyltransferase family. Monomer.

Its subcellular location is the endoplasmic reticulum. The protein resides in the peroxisome. It is found in the mitochondrion inner membrane. The catalysed reaction is (R)-carnitine + acetyl-CoA = O-acetyl-(R)-carnitine + CoA. The enzyme catalyses propanoyl-CoA + (R)-carnitine = O-propanoyl-(R)-carnitine + CoA. It carries out the reaction butanoyl-CoA + (R)-carnitine = O-butanoyl-(R)-carnitine + CoA. It catalyses the reaction hexanoyl-CoA + (R)-carnitine = O-hexanoyl-(R)-carnitine + CoA. The catalysed reaction is octanoyl-CoA + (R)-carnitine = O-octanoyl-(R)-carnitine + CoA. The enzyme catalyses decanoyl-CoA + (R)-carnitine = O-decanoyl-(R)-carnitine + CoA. It carries out the reaction 3-methylbutanoyl-CoA + (R)-carnitine = O-3-methylbutanoyl-(R)-carnitine + CoA. It catalyses the reaction 2-methylpropanoyl-CoA + (R)-carnitine = O-isobutanoyl-(R)-carnitine + CoA. The catalysed reaction is 2-methylbutanoyl-CoA + (R)-carnitine = O-2-methylbutanoyl-(R)-carnitine + CoA. The enzyme catalyses acetoacetyl-CoA + (R)-carnitine = O-3-oxobutanoyl-(R)-carnitine + CoA. It carries out the reaction 3-hydroxybutanoyl-CoA + (R)-carnitine = O-3-hydroxybutanoyl-(R)-carnitine + CoA. It catalyses the reaction 4,8-dimethylnonanoyl-CoA + (R)-carnitine = O-4,8-dimethylnonanoyl-(R)-carnitine + CoA. The catalysed reaction is 2,6-dimethylheptanoyl-CoA + (R)-carnitine = O-2,6-dimethylheptanoyl-(R)-carnitine + CoA. Functionally, catalyzes the reversible transfer of acyl groups from carnitine to coenzyme A (CoA) and regulates the acyl-CoA/CoA ratio. Also plays a crucial role in the transport of fatty acids for beta-oxidation. Responsible for the synthesis of short- and branched-chain acylcarnitines. Active towards some branched-chain amino acid oxidation pathway (BCAAO) intermediates. Trans-2-enoyl-CoAs and 2-methylacyl-CoAs are poor substrates. This is Carnitine O-acetyltransferase from Mus musculus (Mouse).